Reading from the N-terminus, the 259-residue chain is Major prion protein (259 aa).

Residues 1–24 form the signal peptide; it reads MGKIQLGYWILVLFIVTWSDLGLC. The interaction with GRB2, ERI3 and SYN1 stretch occupies residues 25–235; sequence KKPKPRPGGG…EYEAAAQRAY (211 aa). Positions 29 to 110 are disordered; the sequence is PRPGGGWNSG…GYNKWKPDKP (82 aa). Positions 63, 64, 72, 74, 82, 84, 92, and 94 each coordinate Cu(2+). The span at 91-101 shows a compositional bias: gly residues; the sequence is PHGGSNWGQGG. The cysteines at positions 184 and 219 are disulfide-linked. N-linked (GlcNAc...) asparagine glycosylation is found at Asn-186 and Asn-202. The GPI-anchor amidated asparagine moiety is linked to residue Asn-236. Residues 237 to 259 constitute a propeptide, removed in mature form; the sequence is MAFFSAPPVTLLFLSFLIFLIVS.

Belongs to the prion family. Monomer and homodimer. Has a tendency to aggregate into amyloid fibrils containing a cross-beta spine, formed by a steric zipper of superposed beta-strands. Soluble oligomers may represent an intermediate stage on the path to fibril formation. Copper binding may promote oligomerization. Interacts with GRB2, APP, ERI3/PRNPIP and SYN1. Mislocalized cytosolically exposed PrP interacts with MGRN1; this interaction alters MGRN1 subcellular location and causes lysosomal enlargement. Interacts with KIAA1191.

The protein resides in the cell membrane. Its subcellular location is the golgi apparatus. In terms of biological role, its primary physiological function is unclear. Has cytoprotective activity against internal or environmental stresses. May play a role in neuronal development and synaptic plasticity. May be required for neuronal myelin sheath maintenance. May play a role in iron uptake and iron homeostasis. Soluble oligomers are toxic to cultured neuroblastoma cells and induce apoptosis (in vitro). Association with GPC1 (via its heparan sulfate chains) targets PRNP to lipid rafts. Also provides Cu(2+) or Zn(2+) for the ascorbate-mediated GPC1 deaminase degradation of its heparan sulfate side chains. The sequence is that of Major prion protein (PRNP) from Trichosurus vulpecula (Brush-tailed possum).